The chain runs to 194 residues: MIDIGELLRAYRKGYFPMSDPSDGKLYWCQPYNRAIIPMESYRPSRDVRRLLRRNDFRVRFNTDFEGVIRACAAPRPNAVETWISESIIESYLELNRLGIAHSVESWYGDELAGGLYGLAIGGAFFGESMFYRRSYASRIAFDRLVMHLRKRGYLLLDAQIMNPHLQKLGAVDIPHKAYMQMLDAALHKKIPFL.

Belongs to the L/F-transferase family.

The protein resides in the cytoplasm. The catalysed reaction is N-terminal L-lysyl-[protein] + L-leucyl-tRNA(Leu) = N-terminal L-leucyl-L-lysyl-[protein] + tRNA(Leu) + H(+). It carries out the reaction N-terminal L-arginyl-[protein] + L-leucyl-tRNA(Leu) = N-terminal L-leucyl-L-arginyl-[protein] + tRNA(Leu) + H(+). The enzyme catalyses L-phenylalanyl-tRNA(Phe) + an N-terminal L-alpha-aminoacyl-[protein] = an N-terminal L-phenylalanyl-L-alpha-aminoacyl-[protein] + tRNA(Phe). Its function is as follows. Functions in the N-end rule pathway of protein degradation where it conjugates Leu, Phe and, less efficiently, Met from aminoacyl-tRNAs to the N-termini of proteins containing an N-terminal arginine or lysine. The protein is Leucyl/phenylalanyl-tRNA--protein transferase of Chlorobium limicola (strain DSM 245 / NBRC 103803 / 6330).